We begin with the raw amino-acid sequence, 944 residues long: Protocadherin gamma-C5 (944 aa).

Residues 1-29 (MGPKTLPQLAGKWQVLCMLSLCCWGWVSG) form the signal peptide. 6 consecutive Cadherin domains span residues 30-133 (QLRY…SPSF), 134-242 (ATPE…APTF), 243-350 (QSSV…APEV), 351-454 (LLAS…APRF), 455-564 (NQQL…APAV), and 571-677 (WEHS…MPKS). The Extracellular segment spans residues 30–693 (QLRYSVVEES…PPERSDLTLY (664 aa)). Asn265, Asn443, and Asn547 each carry an N-linked (GlcNAc...) asparagine glycan. Residues 694 to 714 (LIVALATVSLLSLVTFTFLSA) traverse the membrane as a helical segment. The Cytoplasmic portion of the chain corresponds to 715–944 (KCLQGNADGD…KKKSGKKEKK (230 aa)). Disordered stretches follow at residues 722 to 747 (DGDG…QSSP), 812 to 853 (SNTL…WPNN), and 914 to 944 (ATLT…KEKK). Positions 820-853 (QQAPPNTDWRFSQAQRPGTSGSQNGDDTGTWPNN) are enriched in polar residues. Residues 934-944 (NKKKSGKKEKK) show a composition bias toward basic residues.

The protein resides in the cell membrane. Functionally, potential calcium-dependent cell-adhesion protein. May be involved in the establishment and maintenance of specific neuronal connections in the brain. The sequence is that of Protocadherin gamma-C5 (PCDHGC5) from Pan troglodytes (Chimpanzee).